A 503-amino-acid chain; its full sequence is Glycoprotein 3-alpha-L-fucosyltransferase A (503 aa).

The Cytoplasmic segment spans residues M1–K10. The helical; Signal-anchor for type II membrane protein transmembrane segment at Y11–L28 threads the bilayer. The Lumenal segment spans residues K29–D503. Residues I44 to T71 are disordered. Over residues Q47 to Q58 the composition is skewed to low complexity. N-linked (GlcNAc...) asparagine glycans are attached at residues N262, N295, and N299.

It belongs to the glycosyltransferase 10 family. Mn(2+) serves as cofactor.

Its subcellular location is the golgi apparatus. The protein localises to the golgi stack membrane. The enzyme catalyses N(4)-{beta-D-GlcNAc-(1-&gt;2)-alpha-D-Man-(1-&gt;3)-[beta-D-GlcNAc-(1-&gt;2)-alpha-D-Man-(1-&gt;6)]-beta-D-Man-(1-&gt;4)-beta-D-GlcNAc-(1-&gt;4)-beta-D-GlcNAc}-L-asparaginyl-[protein] + GDP-beta-L-fucose = N(4)-{beta-D-GlcNAc-(1-&gt;2)-alpha-D-Man-(1-&gt;3)-[beta-D-GlcNAc-(1-&gt;2)-alpha-D-Man-(1-&gt;6)]-beta-D-Man-(1-&gt;4)-beta-D-GlcNAc-(1-&gt;4)-[alpha-L-Fuc(1-&gt;3)]-beta-D-GlcNAc}-L-asparaginyl-[protein] + GDP + H(+). The protein operates within protein modification; protein glycosylation. Its function is as follows. Catalyzes alpha-1,3 glycosidic linkages of N-glycans. Plays a role in neuronal development by promoting ventral nerve cord formation, possibly by promoting interactions between migrating cells and the extracellular matrix or by promoting neural activity. The chain is Glycoprotein 3-alpha-L-fucosyltransferase A (FucTA) from Drosophila melanogaster (Fruit fly).